A 156-amino-acid polypeptide reads, in one-letter code: Small ribosomal subunit protein uS7A/uS7B (156 aa).

The protein belongs to the universal ribosomal protein uS7 family. Part of the 30S ribosomal subunit. Contacts proteins S9 and S11.

One of the primary rRNA binding proteins, it binds directly to 16S rRNA where it nucleates assembly of the head domain of the 30S subunit. Is located at the subunit interface close to the decoding center, probably blocks exit of the E-site tRNA. The sequence is that of Small ribosomal subunit protein uS7A/uS7B from Bartonella bacilliformis (strain ATCC 35685 / KC583 / Herrer 020/F12,63).